The chain runs to 291 residues: Homoserine kinase (291 aa).

80–90 (RPASGLGSSAA) contributes to the ATP binding site.

It belongs to the GHMP kinase family. Homoserine kinase subfamily.

Its subcellular location is the cytoplasm. It catalyses the reaction L-homoserine + ATP = O-phospho-L-homoserine + ADP + H(+). It functions in the pathway amino-acid biosynthesis; L-threonine biosynthesis; L-threonine from L-aspartate: step 4/5. In terms of biological role, catalyzes the ATP-dependent phosphorylation of L-homoserine to L-homoserine phosphate. The sequence is that of Homoserine kinase from Natronomonas pharaonis (strain ATCC 35678 / DSM 2160 / CIP 103997 / JCM 8858 / NBRC 14720 / NCIMB 2260 / Gabara) (Halobacterium pharaonis).